The sequence spans 189 residues: GTP cyclohydrolase 1 (189 aa).

Positions 79, 82, and 150 each coordinate Zn(2+).

The protein belongs to the GTP cyclohydrolase I family. Homomer.

It carries out the reaction GTP + H2O = 7,8-dihydroneopterin 3'-triphosphate + formate + H(+). It functions in the pathway cofactor biosynthesis; 7,8-dihydroneopterin triphosphate biosynthesis; 7,8-dihydroneopterin triphosphate from GTP: step 1/1. The polypeptide is GTP cyclohydrolase 1 (Rickettsia rickettsii (strain Iowa)).